Reading from the N-terminus, the 748-residue chain is Cytosolic phospholipase A2 (748 aa).

The phospholipid binding stretch occupies residues 1-178 (MSFIDPYQHI…MKKLLGPKKS (178 aa)). A Phosphoserine modification is found at Ser-2. Residues 6 to 122 (PYQHIIVEHQ…KVGEKKEVPF (117 aa)) enclose the C2 domain. The Ca(2+) site is built by Asp-40, Thr-41, Asp-43, Asn-65, Asp-93, Ala-94, and Asn-95. Residues 140-739 (SCPDLRFSMA…SNVEARKFFN (600 aa)) enclose the PLA2c domain. The active-site Nucleophile is the Ser-228. A Phosphothreonine modification is found at Thr-268. Positions 427–458 (KHIVSNDSSDSDDEAQGPKGTENEEAEKEYQS) are disordered. 3 positions are modified to phosphoserine: Ser-434, Ser-435, and Ser-437. Phosphoserine; by MAPK is present on Ser-505. Ser-515 bears the Phosphoserine mark. Lys-540 is covalently cross-linked (Glycyl lysine isopeptide (Lys-Gly) (interchain with G-Cter in SUMO2)). The Proton acceptor role is filled by Asp-548. A Glycyl lysine isopeptide (Lys-Gly) (interchain with G-Cter in SUMO2) cross-link involves residue Lys-605. Phosphoserine occurs at positions 726 and 728.

As to quaternary structure, interacts with KAT5. In terms of processing, phosphorylated at both Ser-505 and Ser-726 in response to mitogenic stimuli. As to expression, expressed in various organs including uterus, kidney, spleen, liver, heart, lung and brain (at protein level).

The protein localises to the cytoplasm. Its subcellular location is the golgi apparatus membrane. It localises to the nucleus envelope. The catalysed reaction is a 1,2-diacyl-sn-glycero-3-phosphocholine + H2O = a 1-acyl-sn-glycero-3-phosphocholine + a fatty acid + H(+). The enzyme catalyses a 1-O-alkyl-2-acyl-sn-glycero-3-phosphocholine + H2O = a 1-O-alkyl-sn-glycero-3-phosphocholine + a fatty acid + H(+). It catalyses the reaction a 1-acyl-sn-glycero-3-phosphocholine + H2O = sn-glycerol 3-phosphocholine + a fatty acid + H(+). It carries out the reaction 1-hexadecanoyl-2-(5Z,8Z,11Z,14Z-eicosatetraenoyl)-sn-glycero-3-phosphocholine + H2O = 1-hexadecanoyl-sn-glycero-3-phosphocholine + (5Z,8Z,11Z,14Z)-eicosatetraenoate + H(+). The catalysed reaction is 1,2-di-(5Z,8Z,11Z,14Z-eicosatetraenoyl)-sn-glycero-3-phosphocholine + H2O = 1-(5Z,8Z,11Z,14Z-eicosatetraenoyl)-sn-glycero-3-phosphocholine + (5Z,8Z,11Z,14Z)-eicosatetraenoate + H(+). The enzyme catalyses 1-octadecanoyl-2-(5Z,8Z,11Z,14Z-eicosatetraenoyl)-sn-glycero-3-phosphocholine + H2O = 1-octadecanoyl-sn-glycero-3-phosphocholine + (5Z,8Z,11Z,14Z)-eicosatetraenoate + H(+). It catalyses the reaction 1-hexadecanoyl-2-(9Z,12Z-octadecadienoyl)-sn-glycero-3-phosphocholine + H2O = (9Z,12Z)-octadecadienoate + 1-hexadecanoyl-sn-glycero-3-phosphocholine + H(+). It carries out the reaction 1-octadecanoyl-2-(9Z,12Z,15Z-octadecatrienoyl)-sn-glycero-3-phosphocholine + H2O = (9Z,12Z,15Z)-octadecatrienoate + 1-octadecanoyl-sn-glycero-3-phosphocholine + H(+). The catalysed reaction is 1-(5Z,8Z,11Z,14Z-eicosatetraenoyl)-2-hexadecanoyl-sn-glycero-3-phosphocholine + H2O = 1-(5Z,8Z,11Z,14Z-eicosatetraenoyl)-sn-glycero-3-phosphocholine + hexadecanoate + H(+). The enzyme catalyses 1-O-hexadecyl-2-(5Z,8Z,11Z,14Z)-eicosatetraenoyl-sn-glycero-3-phosphocholine + H2O = 1-O-hexadecyl-sn-glycero-3-phosphocholine + (5Z,8Z,11Z,14Z)-eicosatetraenoate + H(+). It catalyses the reaction 1,2-di-(9Z-octadecenoyl)-sn-glycero-3-phospho-(1'-sn-glycerol) + H2O = 1-(9Z-octadecenoyl)-sn-glycero-3-phospho-(1'-sn-glycerol) + (9Z)-octadecenoate + H(+). It carries out the reaction 1-octadecanoyl-2-(5Z,8Z,11Z,14Z-eicosatetraenoyl)-sn-glycero-3-phosphate + H2O = 1-octadecanoyl-sn-glycero-3-phosphate + (5Z,8Z,11Z,14Z)-eicosatetraenoate + H(+). The catalysed reaction is 1-hexadecanoyl-sn-glycero-3-phosphocholine + H2O = sn-glycerol 3-phosphocholine + hexadecanoate + H(+). The enzyme catalyses 2-(prostaglandin E2)-sn-glycero-3-phosphoethanolamine + H2O = sn-glycero-3-phosphoethanolamine + prostaglandin E2 + H(+). It catalyses the reaction 2-[(15S)-hydroxy-(5Z,8Z,11Z,13E)-eicosatetraenoyl]-sn-glycero-3-phosphocholine + H2O = (15S)-hydroxy-(5Z,8Z,11Z,13E)-eicosatetraenoate + sn-glycerol 3-phosphocholine + H(+). It carries out the reaction 2-[(15R)-hydroxy-(5Z,8Z,11Z,13E)-eicosatetraenoyl]-sn-glycero-3-phosphocholine + H2O = (15R)-hydroxy-(5Z,8Z,11Z,13E)-eicosatetraenoate + sn-glycerol 3-phosphocholine + H(+). The catalysed reaction is 2-(prostaglandin E2)-sn-glycero-3-phosphocholine + H2O = prostaglandin E2 + sn-glycerol 3-phosphocholine + H(+). The enzyme catalyses 2-[(11R)-hydroxy-(5Z,8Z,12E,14Z)-eicosatetraenoyl]-sn-glycero-3-phosphocholine + H2O = (11R)-hydroxy-(5Z,8Z,12E,14Z)-eicosatetraenoate + sn-glycerol 3-phosphocholine + H(+). It catalyses the reaction 1-(5Z,8Z,11Z,14Z-eicosatetraenoyl)-2-O-hexadecyl-sn-glycero-3-phosphocholine + H2O = 2-O-hexadecyl-sn-glycero-3-phosphocholine + (5Z,8Z,11Z,14Z)-eicosatetraenoate + H(+). It carries out the reaction 1-octadecanoyl-2-(5Z,8Z,11Z,14Z-eicosatetraenoyl)-sn-glycero-3-phosphocholine + glycerol = 1-(5Z,8Z,11Z,14Z-eicosatetraenoyl)-glycerol + 1-octadecanoyl-sn-glycero-3-phosphocholine. The catalysed reaction is 1-octadecanoyl-2-(9Z,12Z,15Z-octadecatrienoyl)-sn-glycero-3-phosphocholine + glycerol = 1-(9Z,12Z,15Z-octadecatrienoyl)-glycerol + 1-octadecanoyl-sn-glycero-3-phosphocholine. It functions in the pathway membrane lipid metabolism; glycerophospholipid metabolism. Its pathway is lipid metabolism; arachidonate metabolism. The protein operates within lipid metabolism; prostaglandin biosynthesis. It participates in lipid metabolism; leukotriene B4 biosynthesis. With respect to regulation, activated by cytosolic calcium, which is necessary for binding to membrane lipids. Activated by phosphorylation in response to mitogenic stimuli. Stimulated by agonists such as ATP and thrombin. Has primarily calcium-dependent phospholipase and lysophospholipase activities, with a major role in membrane lipid remodeling and biosynthesis of lipid mediators of the inflammatory response. Plays an important role in embryo implantation and parturition through its ability to trigger prostanoid production. Preferentially hydrolyzes the ester bond of the fatty acyl group attached at sn-2 position of phospholipids (phospholipase A2 activity). Selectively hydrolyzes sn-2 arachidonoyl group from membrane phospholipids, providing the precursor for eicosanoid biosynthesis via the cyclooxygenase pathway. In an alternative pathway of eicosanoid biosynthesis, hydrolyzes sn-2 fatty acyl chain of eicosanoid lysophopholipids to release free bioactive eicosanoids. Hydrolyzes the ester bond of the fatty acyl group attached at sn-1 position of phospholipids (phospholipase A1 activity) only if an ether linkage rather than an ester linkage is present at the sn-2 position. This hydrolysis is not stereospecific. Has calcium-independent phospholipase A2 and lysophospholipase activities in the presence of phosphoinositides. Has O-acyltransferase activity. Catalyzes the transfer of fatty acyl chains from phospholipids to a primary hydroxyl group of glycerol (sn-1 or sn-3), potentially contributing to monoacylglycerol synthesis. This is Cytosolic phospholipase A2 (Pla2g4a) from Mus musculus (Mouse).